A 274-amino-acid polypeptide reads, in one-letter code: Large ribosomal subunit protein uL2 (274 aa).

2 disordered regions span residues 30-54 (EKSL…IRHK) and 223-274 (VAMN…QLKG). Over residues 36–48 (GKKSSGGRNNNGR) the composition is skewed to low complexity. Basic and acidic residues predominate over residues 263-274 (KFSDKYIKQLKG).

The protein belongs to the universal ribosomal protein uL2 family. In terms of assembly, part of the 50S ribosomal subunit. Forms a bridge to the 30S subunit in the 70S ribosome.

Its function is as follows. One of the primary rRNA binding proteins. Required for association of the 30S and 50S subunits to form the 70S ribosome, for tRNA binding and peptide bond formation. It has been suggested to have peptidyltransferase activity; this is somewhat controversial. Makes several contacts with the 16S rRNA in the 70S ribosome. The sequence is that of Large ribosomal subunit protein uL2 from Wolbachia sp. subsp. Brugia malayi (strain TRS).